A 39-amino-acid polypeptide reads, in one-letter code: Phospholipase A2 (39 aa).

Residue His36 is part of the active site.

Belongs to the phospholipase A2 family. Group III subfamily. Requires Ca(2+) as cofactor. Expressed by the venom gland.

Its subcellular location is the secreted. It catalyses the reaction a 1,2-diacyl-sn-glycero-3-phosphocholine + H2O = a 1-acyl-sn-glycero-3-phosphocholine + a fatty acid + H(+). In terms of biological role, PLA2 catalyzes the calcium-dependent hydrolysis of the 2-acyl groups in 3-sn-phosphoglycerides. The protein is Phospholipase A2 of Heloderma horridum horridum (Mexican beaded lizard).